The sequence spans 498 residues: PHD finger protein 10 (498 aa).

Positions 1 to 10 (MAAAAGPGAA) are enriched in low complexity. The disordered stretch occupies residues 1-62 (MAAAAGPGAA…SSRSCETSSQ (62 aa)). Alanine 2 is subject to N-acetylalanine. Serine 12, serine 36, and serine 50 each carry phosphoserine. The essential to induce neural progenitor proliferation stretch occupies residues 89-185 (MLQEQVSEYL…HYKEYSQMQQ (97 aa)). The SAY stretch occupies residues 89–295 (MLQEQVSEYL…PPLDPELPAL (207 aa)). Residue lysine 241 forms a Glycyl lysine isopeptide (Lys-Gly) (interchain with G-Cter in SUMO2) linkage. At serine 270 the chain carries Phosphoserine. The segment covering 285–296 (EPPLDPELPALD) has biased composition (low complexity). Residues 285 to 368 (EPPLDPELPA…KRSVLSKSVP (84 aa)) are disordered. The interval 292–334 (LPALDSDGDSDDGEDGRGDEKRKNKGTSDSSSGNVSEGESPPD) is essential to induce neural progenitor proliferation. Residues serine 297, serine 301, serine 327, and serine 331 each carry the phosphoserine modification. The span at 318-328 (TSDSSSGNVSE) shows a compositional bias: polar residues. Over residues 345–359 (KSKDKAATPRKDGPK) the composition is skewed to basic and acidic residues. The PHD-type 1; degenerate zinc-finger motif lies at 379 to 436 (ICGICLKGKESNKKGKAESLIHCSQCENSGHPSCLDMTMELVSMIKTYPWQCMECKTC). Residue lysine 385 forms a Glycyl lysine isopeptide (Lys-Gly) (interchain with G-Cter in SUMO2) linkage. The segment at 438–481 (ICGQPHHEEEMMFCDMCDRGYHTFCVGLGAIPSGRWICDCCQRA) adopts a PHD-type 2; degenerate zinc-finger fold.

This sequence belongs to the SAYP family. In terms of assembly, component of neural progenitors-specific chromatin remodeling complex (npBAF complex) composed of at least, ARID1A/BAF250A or ARID1B/BAF250B, SMARCD1/BAF60A, SMARCD3/BAF60C, SMARCA2/BRM/BAF190B, SMARCA4/BRG1/BAF190A, SMARCB1/BAF47, SMARCC1/BAF155, SMARCE1/BAF57, SMARCC2/BAF170, PHF10/BAF45A, ACTL6A/BAF53A and actin. Interacts with ACTL6A/BAF53A, SMARCA2/BRM/BAF190B, SMARCA4/BRG1/BAF190A and PBRM1/BAF180.

The protein localises to the nucleus. Its function is as follows. Involved in transcription activity regulation by chromatin remodeling. Belongs to the neural progenitors-specific chromatin remodeling complex (npBAF complex) and is required for the proliferation of neural progenitors. During neural development a switch from a stem/progenitor to a post-mitotic chromatin remodeling mechanism occurs as neurons exit the cell cycle and become committed to their adult state. The transition from proliferating neural stem/progenitor cells to post-mitotic neurons requires a switch in subunit composition of the npBAF and nBAF complexes. As neural progenitors exit mitosis and differentiate into neurons, npBAF complexes which contain ACTL6A/BAF53A and PHF10/BAF45A, are exchanged for homologous alternative ACTL6B/BAF53B and DPF1/BAF45B or DPF3/BAF45C subunits in neuron-specific complexes (nBAF). The npBAF complex is essential for the self-renewal/proliferative capacity of the multipotent neural stem cells. The nBAF complex along with CREST plays a role regulating the activity of genes essential for dendrite growth. In Homo sapiens (Human), this protein is PHD finger protein 10 (PHF10).